The chain runs to 272 residues: Outer surface protein A (272 aa).

The first 16 residues, 1 to 16, serve as a signal peptide directing secretion; it reads MKKYLLGIGLILALIA. Cysteine 17 carries N-palmitoyl cysteine lipidation. Cysteine 17 carries S-diacylglycerol cysteine lipidation.

It belongs to the OspA lipoprotein family.

Its subcellular location is the cell outer membrane. The protein resides in the cell surface. The sequence is that of Outer surface protein A from Borreliella burgdorferi (Lyme disease spirochete).